Consider the following 509-residue polypeptide: Galactose-1-phosphate uridylyltransferase (509 aa).

The protein belongs to the galactose-1-phosphate uridylyltransferase type 2 family.

It localises to the cytoplasm. The catalysed reaction is alpha-D-galactose 1-phosphate + UDP-alpha-D-glucose = alpha-D-glucose 1-phosphate + UDP-alpha-D-galactose. The protein operates within carbohydrate metabolism; galactose metabolism. This Fusobacterium nucleatum subsp. nucleatum (strain ATCC 25586 / DSM 15643 / BCRC 10681 / CIP 101130 / JCM 8532 / KCTC 2640 / LMG 13131 / VPI 4355) protein is Galactose-1-phosphate uridylyltransferase.